The chain runs to 167 residues: uncharacterized protein (167 aa).

This is an uncharacterized protein from Methanocaldococcus jannaschii (strain ATCC 43067 / DSM 2661 / JAL-1 / JCM 10045 / NBRC 100440) (Methanococcus jannaschii).